The sequence spans 925 residues: Nonribosomal peptide synthetase apvA (925 aa).

Residues 15 to 436 form an adenylation (A) domain region; sequence AREDSGHVVV…TGRAKENMII (422 aa). One can recognise a Carrier domain in the interval 564-644; it reads EPQNDLEKTL…DLATALEKLQ (81 aa). Serine 601 carries the O-(pantetheine 4'-phosphoryl)serine modification. The thioesterase (TE) domain stretch occupies residues 663–909; it reads PLWLVHPGAG…HYSMIGPDHV (247 aa).

It belongs to the NRP synthetase family. ApvA specifically produces aspulvinone E in hyphea, in contrast to melA which produces aspulvinone E in conidia where it is converted to UV-protective Asp-melanin.

The enzyme catalyses 2 3-(4-hydroxyphenyl)pyruvate + AH2 + 2 ATP + O2 = aspulvinone E + A + 2 AMP + CO2 + 2 diphosphate + H2O + H(+). Its pathway is secondary metabolite biosynthesis. In terms of biological role, nonribosomal peptide synthetase; part of the gene cluster that mediates the biosynthesis of aspulvinones. The nonribosomal peptide synthetase apvA is responsible for the production of aspulvinone E, the core structure of aspulvinones. ApvA first activates 4-hydroxyphenylpyruvate (HPPA) through its A domain to AMP-HPPA. The HPPA unit is then loaded to the T domain and eventually transferred to the TE domain. Upon loading of another HPPA unit to the T domain, the TE domain promotes the enolate formation on the unit attached. The next step involves head to tail Claisen condensation, followed by the keto-enol tautermerization and a nucleophilic attack on the carbonyl carbon to yield the furanone partial structure. A spontaneous oxidation at the beta-carbon of the thioester might occur in aerobic condition. The TE domain then catalyzes the hydrolysis of the thioester, followed by spontaneous decarboxylation, dehydroxylation and keto-enol tautermerization to give the aspulvinone core. Aspulvinone E is highly unstable and converted to isoaspulvinone E in the presence of light. The structural diversity of the aspulvinones suggests that other tailoring enzymes are involved and have still to be identified. The polypeptide is Nonribosomal peptide synthetase apvA (Aspergillus terreus (strain NIH 2624 / FGSC A1156)).